The sequence spans 883 residues: Valine--tRNA ligase (883 aa).

The 'HIGH' region signature appears at 50-60; that stretch reads PNVTGKLHMGH. Residues 527–531 carry the 'KMSKS' region motif; sequence KMSKS. ATP is bound at residue Lys530. Positions 811-883 form a coiled coil; sequence LNELIDLDEE…KQRLEQLQRA (73 aa). Residues 859–883 are disordered; the sequence is QRTKRSDFEDQLTSTKQRLEQLQRA.

Belongs to the class-I aminoacyl-tRNA synthetase family. ValS type 1 subfamily. As to quaternary structure, monomer.

Its subcellular location is the cytoplasm. It carries out the reaction tRNA(Val) + L-valine + ATP = L-valyl-tRNA(Val) + AMP + diphosphate. In terms of biological role, catalyzes the attachment of valine to tRNA(Val). As ValRS can inadvertently accommodate and process structurally similar amino acids such as threonine, to avoid such errors, it has a 'posttransfer' editing activity that hydrolyzes mischarged Thr-tRNA(Val) in a tRNA-dependent manner. The sequence is that of Valine--tRNA ligase from Lacticaseibacillus casei (Lactobacillus casei).